We begin with the raw amino-acid sequence, 360 residues long: MEELSQALASSFSVSQDLNSTAAPHPRLSQYKSKYSSLEQSERRRRLLELQKSKRLDYVNHARRLAEDDWTGMESEEENKKDDEEMDIDTVKKLPKHYANQLMLSEWLIDVPSDLGQEWIVVVCPVGKRALIVASRGSTSAYTKSGYCVNRFSSLLPGGNRRNSTAKDYTILDCIYNEVNQTYYVLDVMCWRGHPFYDCQTDFRFYWMHSKLPEEEGLGEKTKLNPFKFVGLKNFPCTPESLCDVLSMDFPFEVDGLLFYHKQTHYSPGSTPLVGWLRPYMVSDVLGVAVPAGPLTTKPDYAGHQLQQIMEHKKSQKEGMKEKLTHKASENGHYELEHLSTPKLKGSSHSPDHPGCLMEN.

Methionine 1 carries the N-acetylmethionine modification. Residues 1-42 (MEELSQALASSFSVSQDLNSTAAPHPRLSQYKSKYSSLEQSE) form a disordered region. The tract at residues 1-65 (MEELSQALAS…LDYVNHARRL (65 aa)) is necessary for interaction with KPNB1 and m3G-cap U1 and U5 snRNP import receptor activity. Residues 1-159 (MEELSQALAS…NRFSSLLPGG (159 aa)) are necessary for interaction with XPO1. Residues 7 to 22 (ALASSFSVSQDLNSTA) show a composition bias toward polar residues. One can recognise an IBB domain in the interval 11–73 (SFSVSQDLNS…RLAEDDWTGM (63 aa)). Residue serine 75 is modified to Phosphoserine. The tract at residues 127–129 (GKR) is interaction with m3G-cap structure. The segment at 208–328 (MHSKLPEEEG…GMKEKLTHKA (121 aa)) is necessary for binding to the m3G-cap structure. The tract at residues 339–360 (LSTPKLKGSSHSPDHPGCLMEN) is disordered. Position 350 is a phosphoserine (serine 350).

It belongs to the snurportin family. As to quaternary structure, component of an import snRNP complex composed of KPNB1, SNUPN, SMN1 and ZNF259. Component of a nuclear export receptor complex composed of KPNB1, Ran, SNUPN and XPO1. Found in a trimeric export complex with SNUPN, Ran and XPO1. Interacts (via IBB domain) with KPNB1; the interaction is direct. Interacts with DDX20, IPO7, SMN1, SNRPB and XPO1. Interacts directly with XPO1. Its interaction with XPO1 and binding to m3G-cap U snRNPs appears to be mutually exclusive. Can form homomers.

The protein resides in the nucleus. It localises to the cytoplasm. Its function is as follows. Functions as an U snRNP-specific nuclear import adapter. Involved in the trimethylguanosine (m3G)-cap-dependent nuclear import of U snRNPs. Binds specifically to the terminal m3G-cap U snRNAs. This is Snurportin-1 (SNUPN) from Homo sapiens (Human).